Consider the following 856-residue polypeptide: Envelope glycoprotein gp160 (856 aa).

Residues 1–32 (MRVKEKYQHLRRWGWRWGTMLLGMLMICSATE) form the signal peptide. The Extracellular portion of the chain corresponds to 33 to 684 (KLWVTVYYGV…ITNWLWYIKI (652 aa)). C54 and C74 form a disulfide bridge. N88, N136, N141, N156, N160, N186, N197, N230, N234, N241, N262, N276, N289, N295, N301, N332, N339, and N356 each carry an N-linked (GlcNAc...) asparagine; by host glycan. Disulfide bonds link C119–C205, C126–C196, C131–C157, C218–C247, and C228–C239. A V1 region spans residues 131 to 156 (CTDLKNDTNTNSSSGGMIMEKGEIKN). The V2 stretch occupies residues 157 to 196 (CSFNISTSIRGKVQKEYAFFYKHDIIPIDNDTTSYTLTSC). Residues 296–330 (CTRPNNNTRKRIRIQRGPGRTFVTIGKIGNMRQAH) form a V3 region. C296 and C331 are joined by a disulfide. A CD4-binding loop region spans residues 364–374 (SSGGDLEIVTH). Intrachain disulfides connect C378–C445 and C385–C418. The segment at 385–418 (CNSTQLFNSTWFNSTWSTEGSNNTEGSDTITLPC) is V4. Residues N386, N392, N397, N406, N448, and N463 are each glycosylated (N-linked (GlcNAc...) asparagine; by host). 2 V5 regions span residues 461-471 (NNNGSEIFRPG) and 463-471 (NGSEIFRPG). Residues 512–532 (AVGIGALFLGFLGAAGSTMGA) form a fusion peptide region. Positions 574–592 (KQLQARILAVERYLKDQQL) are immunosuppression. C598 and C604 form a disulfide bridge. N-linked (GlcNAc...) asparagine; by host glycosylation is found at N611, N616, N624, N637, and N674. Positions 633-667 (REINNYTSLIHSLIEESQNQQEKNEQELLELDKWA) form a coiled coil. Residues 662 to 683 (ELDKWASLWNWFNITNWLWYIK) are MPER; binding to GalCer. A helical transmembrane segment spans residues 685–705 (FIMIVGGLVGLRIVFAVLSIV). Over 706–856 (NRVRQGHSPL…IRQGLERILL (151 aa)) the chain is Cytoplasmic. The disordered stretch occupies residues 715–742 (LSFQTHLPTPGGPDRPEGIEEEGGERDR). Residues C764 and C837 are each lipidated (S-palmitoyl cysteine; by host). The Di-leucine internalization motif motif lies at 855–856 (LL).

The protein belongs to the HIV-1 env protein family. In terms of assembly, the mature envelope protein (Env) consists of a homotrimer of non-covalently associated gp120-gp41 heterodimers. The resulting complex protrudes from the virus surface as a spike. There seems to be as few as 10 spikes on the average virion. Interacts with host CD4, CCR5 and CXCR4. Gp120 also interacts with the C-type lectins CD209/DC-SIGN and CLEC4M/DC-SIGNR (collectively referred to as DC-SIGN(R)). Gp120 and gp41 interact with GalCer. Gp120 interacts with host ITGA4/ITGB7 complex; on CD4+ T-cells, this interaction results in rapid activation of integrin ITGAL/LFA-1, which facilitates efficient cell-to-cell spreading of HIV-1. Gp120 interacts with cell-associated heparan sulfate; this interaction increases virus infectivity on permissive cells and may be involved in infection of CD4- cells. As to quaternary structure, the mature envelope protein (Env) consists of a homotrimer of non-covalently associated gp120-gp41 heterodimers. The resulting complex protrudes from the virus surface as a spike. There seems to be as few as 10 spikes on the average virion. Post-translationally, highly glycosylated by host. The high number of glycan on the protein is reffered to as 'glycan shield' because it contributes to hide protein sequence from adaptive immune system. In terms of processing, palmitoylation of the transmembrane protein and of Env polyprotein (prior to its proteolytic cleavage) is essential for their association with host cell membrane lipid rafts. Palmitoylation is therefore required for envelope trafficking to classical lipid rafts, but not for viral replication. Specific enzymatic cleavages in vivo yield mature proteins. Envelope glycoproteins are synthesized as an inactive precursor that is heavily N-glycosylated and processed likely by host cell furin in the Golgi to yield the mature SU and TM proteins. The cleavage site between SU and TM requires the minimal sequence [KR]-X-[KR]-R. About 2 of the 9 disulfide bonds of gp41 are reduced by P4HB/PDI, following binding to CD4 receptor.

Its subcellular location is the virion membrane. It localises to the host cell membrane. The protein localises to the host endosome membrane. Functionally, oligomerizes in the host endoplasmic reticulum into predominantly trimers. In a second time, gp160 transits in the host Golgi, where glycosylation is completed. The precursor is then proteolytically cleaved in the trans-Golgi and thereby activated by cellular furin or furin-like proteases to produce gp120 and gp41. In terms of biological role, attaches the virus to the host lymphoid cell by binding to the primary receptor CD4. This interaction induces a structural rearrangement creating a high affinity binding site for a chemokine coreceptor like CXCR4 and/or CCR5. Acts as a ligand for CD209/DC-SIGN and CLEC4M/DC-SIGNR, which are respectively found on dendritic cells (DCs), and on endothelial cells of liver sinusoids and lymph node sinuses. These interactions allow capture of viral particles at mucosal surfaces by these cells and subsequent transmission to permissive cells. HIV subverts the migration properties of dendritic cells to gain access to CD4+ T-cells in lymph nodes. Virus transmission to permissive T-cells occurs either in trans (without DCs infection, through viral capture and transmission), or in cis (following DCs productive infection, through the usual CD4-gp120 interaction), thereby inducing a robust infection. In trans infection, bound virions remain infectious over days and it is proposed that they are not degraded, but protected in non-lysosomal acidic organelles within the DCs close to the cell membrane thus contributing to the viral infectious potential during DCs' migration from the periphery to the lymphoid tissues. On arrival at lymphoid tissues, intact virions recycle back to DCs' cell surface allowing virus transmission to CD4+ T-cells. Acts as a class I viral fusion protein. Under the current model, the protein has at least 3 conformational states: pre-fusion native state, pre-hairpin intermediate state, and post-fusion hairpin state. During fusion of viral and target intracellular membranes, the coiled coil regions (heptad repeats) assume a trimer-of-hairpins structure, positioning the fusion peptide in close proximity to the C-terminal region of the ectodomain. The formation of this structure appears to drive apposition and subsequent fusion of viral and target cell membranes. Complete fusion occurs in host cell endosomes and is dynamin-dependent, however some lipid transfer might occur at the plasma membrane. The virus undergoes clathrin-dependent internalization long before endosomal fusion, thus minimizing the surface exposure of conserved viral epitopes during fusion and reducing the efficacy of inhibitors targeting these epitopes. Membranes fusion leads to delivery of the nucleocapsid into the cytoplasm. The protein is Envelope glycoprotein gp160 of Homo sapiens (Human).